A 417-amino-acid polypeptide reads, in one-letter code: Mast cell carboxypeptidase A (417 aa).

The first 15 residues, 1-15 (MRLILPVGLIATTLA), serve as a signal peptide directing secretion. The propeptide at 16–109 (IAPVRFDREK…IEKQFDVKED (94 aa)) is activation peptide. In terms of domain architecture, Peptidase M14 spans 118 to 412 (KYNNWEKIVA…LAVKFIAKYI (295 aa)). Cystine bridges form between Cys173–Cys186 and Cys245–Cys268. Positions 176 and 179 each coordinate Zn(2+). His304 contributes to the Zn(2+) binding site. Glu378 acts as the Proton donor/acceptor in catalysis.

This sequence belongs to the peptidase M14 family. It depends on Zn(2+) as a cofactor.

Its subcellular location is the cytoplasmic vesicle. It is found in the secretory vesicle. The catalysed reaction is Release of a C-terminal amino acid, but little or no action with -Asp, -Glu, -Arg, -Lys or -Pro.. In Homo sapiens (Human), this protein is Mast cell carboxypeptidase A (CPA3).